Reading from the N-terminus, the 543-residue chain is tRNA (guanine(37)-N(1))-methyltransferase (543 aa).

The N-terminal 59 residues, M1–T59, are a transit peptide targeting the mitochondrion. S-adenosyl-L-methionine-binding positions include H282, D320–L321, and D348–G349. Positions D366 to M405 are disordered. An S-adenosyl-L-methionine-binding site is contributed by N431.

Belongs to the class I-like SAM-binding methyltransferase superfamily. TRM5/TYW2 family. Monomer.

It localises to the mitochondrion matrix. The protein localises to the nucleus. The protein resides in the cytoplasm. The enzyme catalyses guanosine(37) in tRNA + S-adenosyl-L-methionine = N(1)-methylguanosine(37) in tRNA + S-adenosyl-L-homocysteine + H(+). In terms of biological role, specifically methylates the N1 position of guanosine-37 in various cytoplasmic and mitochondrial tRNAs. Methylation is not dependent on the nature of the nucleoside 5' of the target nucleoside. This is the first step in the biosynthesis of wybutosine (yW), a modified base adjacent to the anticodon of tRNAs and required for accurate decoding. The protein is tRNA (guanine(37)-N(1))-methyltransferase of Cryptococcus neoformans var. neoformans serotype D (strain JEC21 / ATCC MYA-565) (Filobasidiella neoformans).